The following is a 449-amino-acid chain: GTP-binding protein A (449 aa).

The interval methionine 1–serine 77 is disordered. Composition is skewed to low complexity over residues lysine 8–serine 46 and serine 67–serine 77. One can recognise an AIG1-type G domain in the interval glutamine 149–lysine 386. The segment at glycine 158–serine 165 is G1. Position 158–165 (glycine 158–serine 165) interacts with GTP. A G2 region spans residues serine 183–aspartate 187. The interval aspartate 204–glycine 207 is G3. Positions threonine 275–asparagine 278 are G4. A G5 region spans residues glutamate 336–serine 338.

The protein belongs to the TRAFAC class TrmE-Era-EngA-EngB-Septin-like GTPase superfamily. AIG1/Toc34/Toc159-like paraseptin GTPase family. IAN subfamily.

This is GTP-binding protein A (gtpA) from Dictyostelium discoideum (Social amoeba).